We begin with the raw amino-acid sequence, 312 residues long: Olfactory receptor 6C2 (312 aa).

Residues 1–23 (MKNHTVIRTFILLGLTGDPHLQV) lie on the Extracellular side of the membrane. N-linked (GlcNAc...) asparagine glycosylation is present at Asn-3. Residues 24–44 (LLFIFLFLTYMLSVTGNLTII) form a helical membrane-spanning segment. At 45-52 (TLTLVDHH) the chain is on the cytoplasmic side. The chain crosses the membrane as a helical span at residues 53–73 (LKTPMYFFLRNFSFLEVSFTT). Residues 74–97 (VCIPRFLYNISMGDNTITYNACAS) lie on the Extracellular side of the membrane. An N-linked (GlcNAc...) asparagine glycan is attached at Asn-82. An intrachain disulfide couples Cys-95 to Cys-187. Residues 98–118 (QIFFVILFGATEFFLLAAMSY) form a helical membrane-spanning segment. Over 119-137 (DRYVAICKPLHYVVIMNNR) the chain is Cytoplasmic. A helical membrane pass occupies residues 138–158 (VCTLLVLCCWVAGLMIIVPPL). At 159 to 195 (SLGLQLEFCDSNAIDHFSCDAGPLLKISCSDTWVIEQ) the chain is on the extracellular side. The chain crosses the membrane as a helical span at residues 196–215 (MVILMAVFALIITLVCVILS). The Cytoplasmic portion of the chain corresponds to 216 to 235 (YLYIVRTILKFPSVQQRKKA). Residues 236-256 (FSTCSSHMIVVSIAYGSCIFI) form a helical membrane-spanning segment. Residues 257 to 269 (YIKPSAKDEVAIN) are Extracellular-facing. The helical transmembrane segment at 270 to 290 (KGVSVLTTSVAPLLNPFIYTL) threads the bilayer. Residues 291-312 (RNKQVKQAFSDSIKRIAFLSKK) lie on the Cytoplasmic side of the membrane.

This sequence belongs to the G-protein coupled receptor 1 family.

It is found in the cell membrane. Odorant receptor. The sequence is that of Olfactory receptor 6C2 (OR6C2) from Homo sapiens (Human).